A 1269-amino-acid chain; its full sequence is DNA-directed RNA polymerase subunit beta'' (1269 aa).

C226, C301, C308, and C311 together coordinate Zn(2+).

The protein belongs to the RNA polymerase beta' chain family. RpoC2 subfamily. In terms of assembly, in plastids the minimal PEP RNA polymerase catalytic core is composed of four subunits: alpha, beta, beta', and beta''. When a (nuclear-encoded) sigma factor is associated with the core the holoenzyme is formed, which can initiate transcription. The cofactor is Zn(2+).

It is found in the plastid. Its subcellular location is the chloroplast. It catalyses the reaction RNA(n) + a ribonucleoside 5'-triphosphate = RNA(n+1) + diphosphate. DNA-dependent RNA polymerase catalyzes the transcription of DNA into RNA using the four ribonucleoside triphosphates as substrates. The protein is DNA-directed RNA polymerase subunit beta'' of Cyanidium caldarium (Red alga).